A 280-amino-acid chain; its full sequence is Energy-coupling factor transporter ATP-binding protein EcfA1 (280 aa).

Residues 6–244 (IECKNVVYKY…VPLMKNIGLD (239 aa)) enclose the ABC transporter domain. 43 to 50 (GHNGSGKS) serves as a coordination point for ATP.

This sequence belongs to the ABC transporter superfamily. Energy-coupling factor EcfA family. As to quaternary structure, forms a stable energy-coupling factor (ECF) transporter complex composed of 2 membrane-embedded substrate-binding proteins (S component), 2 ATP-binding proteins (A component) and 2 transmembrane proteins (T component).

It localises to the cell membrane. Functionally, ATP-binding (A) component of a common energy-coupling factor (ECF) ABC-transporter complex. Unlike classic ABC transporters this ECF transporter provides the energy necessary to transport a number of different substrates. This Clostridium novyi (strain NT) protein is Energy-coupling factor transporter ATP-binding protein EcfA1.